The chain runs to 156 residues: Cyclin-dependent protein kinase inhibitor SMR10 (156 aa).

Residues 52–90 (QDQDLEPKSQETNNCSRKEGATVKKEEEEEDDYCKTPTR) form a disordered region. Basic and acidic residues predominate over residues 67-77 (SRKEGATVKKE).

Functionally, probable cyclin-dependent protein kinase (CDK) inhibitor that functions as a repressor of mitosis in the endoreduplication cell cycle. This Arabidopsis thaliana (Mouse-ear cress) protein is Cyclin-dependent protein kinase inhibitor SMR10.